Consider the following 371-residue polypeptide: Cytochrome b (371 aa).

A run of 4 helical transmembrane segments spans residues 25–45, 69–90, 105–125, and 170–190; these read FGSM…FLAV, WMMQ…YIHI, WMSG…GYVL, and FFAL…LHII. The heme b site is built by His75 and His89. His174 and His188 together coordinate heme b. His193 lines the a ubiquinone pocket. 4 consecutive transmembrane segments (helical) span residues 218–238, 280–300, 312–332, and 339–358; these read HKDL…VSFF, LGGA…PFTH, FSQL…WAAT, and FIVI…LLIP.

The protein belongs to the cytochrome b family. The cytochrome bc1 complex contains 3 respiratory subunits (MT-CYB, CYC1 and UQCRFS1), 2 core proteins (UQCRC1 and UQCRC2) and probably 6 low-molecular weight proteins. Heme b is required as a cofactor.

The protein resides in the mitochondrion inner membrane. Functionally, component of the ubiquinol-cytochrome c reductase complex (complex III or cytochrome b-c1 complex) that is part of the mitochondrial respiratory chain. The b-c1 complex mediates electron transfer from ubiquinol to cytochrome c. Contributes to the generation of a proton gradient across the mitochondrial membrane that is then used for ATP synthesis. In Leiopython albertisii (Northern white-lipped python), this protein is Cytochrome b (MT-CYB).